The following is a 574-amino-acid chain: Glucose-6-phosphate 1-dehydrogenase, chloroplastic (574 aa).

Residues 93 to 100 and Arg-127 contribute to the NADP(+) site; that span reads GASGDLAK. Cysteines 145 and 153 form a disulfide. Lys-230 serves as a coordination point for NADP(+). D-glucose 6-phosphate-binding positions include Lys-230, 260–264, Glu-298, and Asp-317; that span reads HYLGK. Residue His-322 is the Proton acceptor of the active site. Position 415 (Lys-415) interacts with NADP(+). 2 residues coordinate D-glucose 6-phosphate: Lys-418 and Lys-423. Residues Arg-424, Arg-428, and Arg-457 each contribute to the NADP(+) site. Position 459 (Gln-459) interacts with D-glucose 6-phosphate. NADP(+) is bound by residues 465–467 and Arg-550; that span reads YLK.

This sequence belongs to the glucose-6-phosphate dehydrogenase family. As to quaternary structure, homodimer.

Its subcellular location is the plastid. It is found in the chloroplast. The catalysed reaction is D-glucose 6-phosphate + NADP(+) = 6-phospho-D-glucono-1,5-lactone + NADPH + H(+). It participates in carbohydrate degradation; pentose phosphate pathway; D-ribulose 5-phosphate from D-glucose 6-phosphate (oxidative stage): step 1/3. With respect to regulation, regulated by metabolites. Post-translationally inactivated by cysteine-mediated redox modification via the ferredoxin-thioredoxin system in the light and this avoids futile cycles with photosynthetic CO2 fixation. Its function is as follows. Catalyzes the rate-limiting step of the oxidative pentose-phosphate pathway, which represents a route for the dissimilation of carbohydrates besides glycolysis. The main function of this enzyme is to provide reducing power (NADPH) and pentose phosphates for fatty acid and nucleic acid synthesis which are involved in membrane synthesis and cell division. The sequence is that of Glucose-6-phosphate 1-dehydrogenase, chloroplastic (G6PD) from Spinacia oleracea (Spinach).